We begin with the raw amino-acid sequence, 339 residues long: DNA-directed RNA polymerase subunit alpha (339 aa).

The segment at 1–233 is alpha N-terminal domain (alpha-NTD); that stretch reads MVREEVAGST…DLFLPFLHAE (233 aa). Positions 264–339 are alpha C-terminal domain (alpha-CTD); the sequence is KKGIPLNCIF…IDLLKNKLSF (76 aa).

It belongs to the RNA polymerase alpha chain family. As to quaternary structure, in plastids the minimal PEP RNA polymerase catalytic core is composed of four subunits: alpha, beta, beta', and beta''. When a (nuclear-encoded) sigma factor is associated with the core the holoenzyme is formed, which can initiate transcription.

The protein localises to the plastid. Its subcellular location is the chloroplast. It carries out the reaction RNA(n) + a ribonucleoside 5'-triphosphate = RNA(n+1) + diphosphate. DNA-dependent RNA polymerase catalyzes the transcription of DNA into RNA using the four ribonucleoside triphosphates as substrates. In Thinopyrum bessarabicum (Wheatgrass), this protein is DNA-directed RNA polymerase subunit alpha.